Consider the following 165-residue polypeptide: uncharacterized protein (165 aa).

The helical transmembrane segment at 16-36 (ASISSILNFFFFYIMEYFVAV) threads the bilayer.

The protein belongs to the asfivirus F165R family.

Its subcellular location is the host membrane. This is an uncharacterized protein from African swine fever virus (isolate Tick/Malawi/Lil 20-1/1983) (ASFV).